Here is a 120-residue protein sequence, read N- to C-terminus: NAD(P)H-quinone oxidoreductase subunit 3 (120 aa).

A run of 3 helical transmembrane segments spans residues 11–31, 64–84, and 89–109; these read LIFL…SYLI, MFAL…PWAV, and LGLL…VALV.

This sequence belongs to the complex I subunit 3 family. In terms of assembly, NDH-1 can be composed of about 15 different subunits; different subcomplexes with different compositions have been identified which probably have different functions.

The protein resides in the cell inner membrane. The catalysed reaction is a plastoquinone + NADH + (n+1) H(+)(in) = a plastoquinol + NAD(+) + n H(+)(out). The enzyme catalyses a plastoquinone + NADPH + (n+1) H(+)(in) = a plastoquinol + NADP(+) + n H(+)(out). In terms of biological role, NDH-1 shuttles electrons from an unknown electron donor, via FMN and iron-sulfur (Fe-S) centers, to quinones in the respiratory and/or the photosynthetic chain. The immediate electron acceptor for the enzyme in this species is believed to be plastoquinone. Couples the redox reaction to proton translocation, and thus conserves the redox energy in a proton gradient. Cyanobacterial NDH-1 also plays a role in inorganic carbon-concentration. This is NAD(P)H-quinone oxidoreductase subunit 3 from Gloeobacter violaceus (strain ATCC 29082 / PCC 7421).